We begin with the raw amino-acid sequence, 138 residues long: ATP synthase epsilon chain (138 aa).

The protein belongs to the ATPase epsilon chain family. In terms of assembly, F-type ATPases have 2 components, CF(1) - the catalytic core - and CF(0) - the membrane proton channel. CF(1) has five subunits: alpha(3), beta(3), gamma(1), delta(1), epsilon(1). CF(0) has three main subunits: a, b and c.

The protein resides in the cell inner membrane. Its function is as follows. Produces ATP from ADP in the presence of a proton gradient across the membrane. This chain is ATP synthase epsilon chain, found in Endomicrobium trichonymphae.